Consider the following 319-residue polypeptide: Putative peptide biosynthesis protein YydG (319 aa).

Residues 1 to 214 (MYNKTVSINL…HCPGYDIVYH (214 aa)) form the Radical SAM core domain. Cys-14, Cys-18, and Cys-21 together coordinate [4Fe-4S] cluster.

[4Fe-4S] cluster serves as cofactor.

Its function is as follows. Required for production of the modified peptide YydF. May activate a metalloenzyme (Potential). The protein is Putative peptide biosynthesis protein YydG (yydG) of Bacillus subtilis (strain 168).